We begin with the raw amino-acid sequence, 353 residues long: Melatonin receptor type 1A (353 aa).

A disordered region spans residues 1 to 26; that stretch reads MRANGSELNGTVLPRDPPAEGSPRRP. At 1-32 the chain is on the extracellular side; that stretch reads MRANGSELNGTVLPRDPPAEGSPRRPPWVTST. N-linked (GlcNAc...) asparagine glycans are attached at residues asparagine 4 and asparagine 9. The helical transmembrane segment at 33–53 threads the bilayer; that stretch reads LATILIFTIVVDLLGNLLVIL. Over 54–66 the chain is Cytoplasmic; it reads SVYRNKKLRNAGN. Residues 67-87 form a helical membrane-spanning segment; it reads IFVVSLAIADLVVAIYPYPLV. The Extracellular portion of the chain corresponds to 88–105; sequence LTSVFHNGWNLGYLHCQI. Residues cysteine 103 and cysteine 180 are joined by a disulfide bond. The chain crosses the membrane as a helical span at residues 106–126; the sequence is SGFLMGLSVIGSIFNITGIAI. Residues 127 to 145 lie on the Cytoplasmic side of the membrane; the sequence is NRYCYICHSLKYDKLYSDK. The chain crosses the membrane as a helical span at residues 146–166; the sequence is NSLCYVGLIWVLTVVAIVPNL. At 167-190 the chain is on the extracellular side; the sequence is FVGSLQYDPRIYSCTFAQSVSSAY. A helical transmembrane segment spans residues 191–211; it reads TIAVVFFHFILPIAIVTYCYL. Over 212-243 the chain is Cytoplasmic; sequence RIWILVIQVRRRVKPDNNPRLKPHDFRNFVTM. Residues 244 to 264 traverse the membrane as a helical segment; sequence FVVFVLFAVCWAPLNFIGLAV. The Extracellular segment spans residues 265–277; sequence AVDPETIIPRIPE. The helical transmembrane segment at 278–298 threads the bilayer; it reads WLFVSSYYMAYFNSCLNAIIY. At 299–353 the chain is on the cytoplasmic side; the sequence is GLLNQNFRREYKKIVVSFCTAKAFFQDSSNDAADRIRSKPSPLITNNNQVKVDSV.

This sequence belongs to the G-protein coupled receptor 1 family. Expressed in optic tectum and retina, less in neostriatum, hypothalamus and thalamus.

Its subcellular location is the cell membrane. Functionally, high affinity receptor for melatonin. The activity of this receptor is mediated by pertussis toxin sensitive G proteins that inhibits adenylate cyclase activity. The sequence is that of Melatonin receptor type 1A from Gallus gallus (Chicken).